The following is a 423-amino-acid chain: Testican-2 (423 aa).

The first 22 residues, 1–22 (MRAPGSGRLALPLLLLAVVALA), serve as a signal peptide directing secretion. Position 72 is a phosphoserine (Ser-72). Cystine bridges form between Cys-90/Cys-101, Cys-95/Cys-111, Cys-136/Cys-166, Cys-139/Cys-159, and Cys-148/Cys-180. Positions 130 to 182 (GGKDSVCKPCHMAQLASVCGSDGHTYSSVCKLEQQACLSSKQLAVRCEGPCPC) constitute a Kazal-like domain. N-linked (GlcNAc...) asparagine glycosylation is present at Asn-225. One can recognise a Thyroglobulin type-1 domain in the interval 309 to 375 (KPPCLAELER…GTRMHGTPDC (67 aa)). 3 disulfides stabilise this stretch: Cys-312/Cys-336, Cys-347/Cys-354, and Cys-356/Cys-375. Residues Ser-382 and Ser-387 are each glycosylated (O-linked (Xyl...) (glycosaminoglycan) serine). Positions 387 to 423 (SGVGWEDEEEKETEEAGEEAEEEEGEAGEADDGGYIW) are disordered. Over residues 391 to 423 (WEDEEEKETEEAGEEAEEEEGEAGEADDGGYIW) the composition is skewed to acidic residues.

O-glycosylated; contains chondroitin sulfate and heparan sulfate. In terms of tissue distribution, brain specific.

It is found in the secreted. It localises to the extracellular space. Its subcellular location is the extracellular matrix. Its function is as follows. May participate in diverse steps of neurogenesis. Binds calcium. This Mus musculus (Mouse) protein is Testican-2 (Spock2).